Consider the following 124-residue polypeptide: Glycine cleavage system H protein (124 aa).

One can recognise a Lipoyl-binding domain in the interval 22–104; that stretch reads TATVGITDFA…YGDGWMIEIE (83 aa). K63 carries the N6-lipoyllysine modification.

This sequence belongs to the GcvH family. As to quaternary structure, the glycine cleavage system is composed of four proteins: P, T, L and H. (R)-lipoate is required as a cofactor.

Functionally, the glycine cleavage system catalyzes the degradation of glycine. The H protein shuttles the methylamine group of glycine from the P protein to the T protein. The protein is Glycine cleavage system H protein of Salinibacter ruber (strain DSM 13855 / M31).